Here is a 264-residue protein sequence, read N- to C-terminus: Elongation factor Ts (264 aa).

The interval 76-79 is involved in Mg(2+) ion dislocation from EF-Tu; it reads TDFV.

Belongs to the EF-Ts family.

The protein resides in the cytoplasm. Functionally, associates with the EF-Tu.GDP complex and induces the exchange of GDP to GTP. It remains bound to the aminoacyl-tRNA.EF-Tu.GTP complex up to the GTP hydrolysis stage on the ribosome. In Deinococcus deserti (strain DSM 17065 / CIP 109153 / LMG 22923 / VCD115), this protein is Elongation factor Ts.